Consider the following 703-residue polypeptide: Fanconi-associated nuclease 1 homolog (703 aa).

Glu529, Asp651, Glu666, and Val667 together coordinate Mn(2+). The VRR-NUC domain occupies 597 to 698 (YIREHQRKTF…EVDVEVCHVS (102 aa)).

It belongs to the FAN1 family. Mn(2+) serves as cofactor. It depends on Mg(2+) as a cofactor.

The protein localises to the nucleus. It carries out the reaction Hydrolytically removes 5'-nucleotides successively from the 3'-hydroxy termini of 3'-hydroxy-terminated oligonucleotides.. Functionally, nuclease required for the repair of DNA interstrand cross-links (ICL). Acts as a 5'-3' exonuclease that anchors at a cut end of DNA and cleaves DNA successively at every third nucleotide, allowing to excise an ICL from one strand through flanking incisions. In Schizosaccharomyces pombe (strain 972 / ATCC 24843) (Fission yeast), this protein is Fanconi-associated nuclease 1 homolog.